Here is a 169-residue protein sequence, read N- to C-terminus: Disulfide bond formation protein B 1 (169 aa).

Topologically, residues 1 to 13 are cytoplasmic; sequence MSALLKPLDNRLF. Residues 14-30 form a helical membrane-spanning segment; sequence WPAVAIGGLLILAFVLY. The Periplasmic portion of the chain corresponds to 31–48; that stretch reads LQHVRGFAPCSLCIFIRL. A disulfide bridge links C40 with C43. The helical transmembrane segment at 49 to 64 threads the bilayer; it reads DVLGLVLAGIVGSLAP. Residues 65 to 71 are Cytoplasmic-facing; sequence RSRIAGG. A helical membrane pass occupies residues 72-89; that stretch reads IAALGMLAASLGGIYHAW. At 90–145 the chain is on the periplasmic side; that stretch reads SLVAEEKLAAQGMGSCKMFMGFPEWIPLDTWLPQVFQPEGLCGEVVWTLLGQSMAV. C105 and C131 are disulfide-bonded. A helical transmembrane segment spans residues 146-164; sequence WSLALFVFCLLVLAAKLAF. At 165–169 the chain is on the cytoplasmic side; it reads GRRTA.

The protein belongs to the DsbB family.

It is found in the cell inner membrane. Required for disulfide bond formation in some periplasmic proteins. Acts by oxidizing the DsbA protein. In Pseudomonas aeruginosa (strain UCBPP-PA14), this protein is Disulfide bond formation protein B 1.